The chain runs to 675 residues: Vitamin K-dependent protein S (675 aa).

Positions 1-24 are cleaved as a signal peptide; it reads MRVLSARFRVLLACLALVIPVSET. The propeptide occupies 25–41; the sequence is NFLSKERASQVLVRKRR. A Gla domain is found at 42 to 87; that stretch reads ANTLFEETMKGNLERECIEELCNKEEAREVFENNPETDYFYPKYLG. Residues Glu-47, Glu-48, Glu-55, Glu-57, Glu-60, Glu-61, Glu-66, Glu-67, Glu-70, Glu-73, and Glu-77 each carry the 4-carboxyglutamate modification. An intrachain disulfide couples Cys-58 to Cys-63. Residues 88–116 form a thrombin-sensitive region; the sequence is CLGAFRVGSFHAARQSANAYPDLRSCVKA. One can recognise an EGF-like 1 domain in the interval 117–155; it reads ISDQCDPIPCNEDGYLACQDGQAAFTCFCKPGWQGDRCQ. Intrachain disulfides connect Cys-121–Cys-134, Cys-126–Cys-143, Cys-145–Cys-154, Cys-161–Cys-175, Cys-171–Cys-184, Cys-186–Cys-199, Cys-205–Cys-217, Cys-212–Cys-226, Cys-228–Cys-241, Cys-247–Cys-256, Cys-252–Cys-265, Cys-267–Cys-282, and Cys-449–Cys-475. Position 136 is a (3R)-3-hydroxyaspartate (Asp-136). One can recognise an EGF-like 2; calcium-binding domain in the interval 157-200; sequence DVNECKDPSNVNGGCSQICDNTPGSYHCSCKRGFAMLPNKKDCK. Residues 201–242 form the EGF-like 3; calcium-binding domain; the sequence is DLDECALKPSVCGTAVCKNIPGDFECECPDGYRYDPSSKSCK. In terms of domain architecture, EGF-like 4; calcium-binding spans 243 to 283; sequence DVDECSENMCAQLCVNFPGGYSCYCDGKKGFKLAQDQKSCE. 2 consecutive Laminin G-like domains span residues 299–475 and 484–665; these read LLYL…NKHC and YYPG…AHSC. 2 N-linked (GlcNAc...) asparagine glycosylation sites follow: Asn-499 and Asn-509. Cys-638 and Cys-665 form a disulfide bridge.

In terms of processing, the iron and 2-oxoglutarate dependent 3-hydroxylation of aspartate and asparagine is (R) stereospecific within EGF domains. Plasma.

The protein resides in the secreted. Functionally, anticoagulant plasma protein; it is a cofactor to activated protein C in the degradation of coagulation factors Va and VIIIa. It helps to prevent coagulation and stimulating fibrinolysis. In Mus musculus (Mouse), this protein is Vitamin K-dependent protein S (Pros1).